The sequence spans 233 residues: Riboflavin kinase (233 aa).

A unknown region spans residues 1–99; it reads MSGATSTGDV…YRRIFEDPGE (99 aa). The tract at residues 100–233 is riboflavin kinase; it reads LALAGTVTSG…DDEVTIRVEA (134 aa). 109–114 contacts CDP; the sequence is GMGEGR. Mg(2+) is bound by residues Thr-138 and Asn-140. FMN is bound by residues Thr-200 and Glu-208. 213–216 lines the CDP pocket; the sequence is VKLR.

It belongs to the archaeal riboflavin kinase family. Requires Mg(2+) as cofactor.

The enzyme catalyses riboflavin + CTP = CDP + FMN + H(+). Its pathway is cofactor biosynthesis; FMN biosynthesis; FMN from riboflavin (CTP route): step 1/1. Catalyzes the CTP-dependent phosphorylation of riboflavin (vitamin B2) to form flavin mononucleotide (FMN). The chain is Riboflavin kinase (ribK) from Halobacterium salinarum (strain ATCC 700922 / JCM 11081 / NRC-1) (Halobacterium halobium).